A 507-amino-acid chain; its full sequence is Histidine ammonia-lyase (507 aa).

A cross-link (5-imidazolinone (Ala-Gly)) is located at residues 141–143 (ASG). Serine 142 bears the 2,3-didehydroalanine (Ser) mark.

This sequence belongs to the PAL/histidase family. Contains an active site 4-methylidene-imidazol-5-one (MIO), which is formed autocatalytically by cyclization and dehydration of residues Ala-Ser-Gly.

The protein localises to the cytoplasm. The catalysed reaction is L-histidine = trans-urocanate + NH4(+). Its pathway is amino-acid degradation; L-histidine degradation into L-glutamate; N-formimidoyl-L-glutamate from L-histidine: step 1/3. This chain is Histidine ammonia-lyase, found in Burkholderia lata (strain ATCC 17760 / DSM 23089 / LMG 22485 / NCIMB 9086 / R18194 / 383).